Reading from the N-terminus, the 64-residue chain is Conotoxin VnMLCL-033 (64 aa).

Positions 1-19 are cleaved as a signal peptide; the sequence is MLCLPVFIILLLLASPAAP. The propeptide occupies 20–43; that stretch reads NPLQTRIQSNLIRAGPEDANIKTD. An Isoleucine amide modification is found at isoleucine 63.

This sequence belongs to the conotoxin T superfamily. Expressed by the venom duct.

The protein resides in the secreted. In Conus ventricosus (Mediterranean cone), this protein is Conotoxin VnMLCL-033.